Here is a 388-residue protein sequence, read N- to C-terminus: Succinate--CoA ligase [ADP-forming] subunit beta (388 aa).

In terms of domain architecture, ATP-grasp spans 9–244 (KQLFQKYGVP…LDEEDPFEIE (236 aa)). ATP-binding positions include Lys-46, 53 to 55 (GRG), Glu-99, Leu-102, and Glu-107. Residues Asn-199 and Asp-213 each contribute to the Mg(2+) site. Substrate-binding positions include Asn-265 and 322–324 (GIL).

It belongs to the succinate/malate CoA ligase beta subunit family. Heterotetramer of two alpha and two beta subunits. The cofactor is Mg(2+).

It catalyses the reaction succinate + ATP + CoA = succinyl-CoA + ADP + phosphate. The enzyme catalyses GTP + succinate + CoA = succinyl-CoA + GDP + phosphate. It participates in carbohydrate metabolism; tricarboxylic acid cycle; succinate from succinyl-CoA (ligase route): step 1/1. Its function is as follows. Succinyl-CoA synthetase functions in the citric acid cycle (TCA), coupling the hydrolysis of succinyl-CoA to the synthesis of either ATP or GTP and thus represents the only step of substrate-level phosphorylation in the TCA. The beta subunit provides nucleotide specificity of the enzyme and binds the substrate succinate, while the binding sites for coenzyme A and phosphate are found in the alpha subunit. The chain is Succinate--CoA ligase [ADP-forming] subunit beta from Syntrophobacter fumaroxidans (strain DSM 10017 / MPOB).